Reading from the N-terminus, the 287-residue chain is uncharacterized protein (287 aa).

This is an uncharacterized protein from Acanthamoeba polyphaga mimivirus (APMV).